The chain runs to 311 residues: Ribosomal RNA small subunit methyltransferase H (311 aa).

Residues 39–41, Asp-59, Phe-81, Asp-102, and His-109 contribute to the S-adenosyl-L-methionine site; that span reads GGH.

This sequence belongs to the methyltransferase superfamily. RsmH family.

The protein resides in the cytoplasm. It catalyses the reaction cytidine(1402) in 16S rRNA + S-adenosyl-L-methionine = N(4)-methylcytidine(1402) in 16S rRNA + S-adenosyl-L-homocysteine + H(+). Functionally, specifically methylates the N4 position of cytidine in position 1402 (C1402) of 16S rRNA. The polypeptide is Ribosomal RNA small subunit methyltransferase H (Porphyromonas gingivalis (strain ATCC BAA-308 / W83)).